A 192-amino-acid polypeptide reads, in one-letter code: dTTP/UTP pyrophosphatase (192 aa).

Residue Asp-72 is the Proton acceptor of the active site.

It belongs to the Maf family. YhdE subfamily. A divalent metal cation is required as a cofactor.

The protein localises to the cytoplasm. It catalyses the reaction dTTP + H2O = dTMP + diphosphate + H(+). It carries out the reaction UTP + H2O = UMP + diphosphate + H(+). Functionally, nucleoside triphosphate pyrophosphatase that hydrolyzes dTTP and UTP. May have a dual role in cell division arrest and in preventing the incorporation of modified nucleotides into cellular nucleic acids. The chain is dTTP/UTP pyrophosphatase from Geobacter metallireducens (strain ATCC 53774 / DSM 7210 / GS-15).